The sequence spans 194 residues: Large ribosomal subunit protein bL27c (194 aa).

The transit peptide at 1–57 directs the protein to the chloroplast; it reads MAVTTSMSFNLMASFRGMSLSSSSSSSFFKGEFGPSSLRLPNKSPLSVSPFPLTIES. Positions 57-76 are disordered; that stretch reads SAHKKGAGSTKNGRDSKGQR.

In terms of assembly, component of the chloroplast large ribosomal subunit (LSU). Mature 70S chloroplast ribosomes of higher plants consist of a small (30S) and a large (50S) subunit. The 30S small subunit contains 1 molecule of ribosomal RNA (16S rRNA) and 24 different proteins. The 50S large subunit contains 3 rRNA molecules (23S, 5S and 4.5S rRNA) and 33 different proteins.

It localises to the plastid. It is found in the chloroplast. In terms of biological role, component of the chloroplast ribosome (chloro-ribosome), a dedicated translation machinery responsible for the synthesis of chloroplast genome-encoded proteins, including proteins of the transcription and translation machinery and components of the photosynthetic apparatus. This is Large ribosomal subunit protein bL27c (RPL27) from Spinacia oleracea (Spinach).